The following is a 55-amino-acid chain: Large ribosomal subunit protein bL33 (55 aa).

The segment covering 1-11 (MAKSGRDKIKL) has biased composition (basic and acidic residues). A disordered region spans residues 1-28 (MAKSGRDKIKLESTAGTGHFYTTTKNKR). Polar residues predominate over residues 14–24 (TAGTGHFYTTT).

This sequence belongs to the bacterial ribosomal protein bL33 family.

This chain is Large ribosomal subunit protein bL33, found in Janthinobacterium sp. (strain Marseille) (Minibacterium massiliensis).